The chain runs to 141 residues: Hemoglobin subunit alpha (141 aa).

Residues 1–141 enclose the Globin domain; that stretch reads VLSDEDKTNV…VSTVLTSKYR (141 aa). Serine 3 carries the phosphoserine modification. An N6-succinyllysine modification is found at lysine 7. Position 8 is a phosphothreonine (threonine 8). Lysine 11 carries the post-translational modification N6-succinyllysine. Residue lysine 16 is modified to N6-acetyllysine; alternate. Lysine 16 carries the post-translational modification N6-succinyllysine; alternate. Position 24 is a phosphotyrosine (tyrosine 24). Serine 35 bears the Phosphoserine mark. Lysine 40 is subject to N6-succinyllysine. At serine 49 the chain carries Phosphoserine. Histidine 58 contributes to the O2 binding site. Histidine 87 provides a ligand contact to heme b. A Phosphoserine modification is found at serine 102. A Phosphothreonine modification is found at threonine 108. Phosphoserine occurs at positions 124 and 131. Phosphothreonine is present on residues threonine 134 and threonine 137. Residue serine 138 is modified to Phosphoserine.

It belongs to the globin family. As to quaternary structure, heterotetramer of two alpha chains and two beta chains. As to expression, red blood cells.

Its function is as follows. Involved in oxygen transport from the lung to the various peripheral tissues. In terms of biological role, hemopressin acts as an antagonist peptide of the cannabinoid receptor CNR1. Hemopressin-binding efficiently blocks cannabinoid receptor CNR1 and subsequent signaling. The sequence is that of Hemoglobin subunit alpha (HBA) from Trichechus inunguis (Amazon manatee).